The primary structure comprises 208 residues: 3,4-dihydroxy-2-butanone 4-phosphate synthase (208 aa).

T3 carries the post-translational modification Phosphothreonine. E27 provides a ligand contact to Mg(2+). D31 provides a ligand contact to D-ribulose 5-phosphate. C56 carries the post-translational modification S-glutathionyl cysteine; by GRX2. Residues T88 and 145 to 149 (RRGHT) each bind D-ribulose 5-phosphate. H148 serves as a coordination point for Mg(2+).

It belongs to the DHBP synthase family. In terms of assembly, homodimer. The cofactor is Mg(2+). Requires Mn(2+) as cofactor. Post-translationally, S-glutathionylation of Cys-56 is reversible and dependent on the cytoplasmic isoform of glutaredoxin-2.

It is found in the cytoplasm. It localises to the nucleus. The protein resides in the mitochondrion intermembrane space. The enzyme catalyses D-ribulose 5-phosphate = (2S)-2-hydroxy-3-oxobutyl phosphate + formate + H(+). It participates in cofactor biosynthesis; riboflavin biosynthesis; 2-hydroxy-3-oxobutyl phosphate from D-ribulose 5-phosphate: step 1/1. Functionally, catalyzes the conversion of D-ribulose 5-phosphate to formate and 3,4-dihydroxy-2-butanone 4-phosphate. Also has an unrelated function in expression of mitochondrial respiration. The protein is 3,4-dihydroxy-2-butanone 4-phosphate synthase (RIB3) of Saccharomyces cerevisiae (strain ATCC 204508 / S288c) (Baker's yeast).